The sequence spans 83 residues: Protein Vpr (83 aa).

The residue at position 79 (serine 79) is a Phosphoserine; by host.

Interacts with human UNG.

The protein resides in the virion. The protein localises to the host nucleus. Stimulates gene expression driven by the HIV-2 LTR. Prevents infected cells from undergoing mitosis and proliferating, by inducing arrest or delay in the G2 phase of the cell cycle. Cell cycle arrest creates a favorable environment for maximizing viral expression and production. This Pan troglodytes (Chimpanzee) protein is Protein Vpr.